The sequence spans 550 residues: (+)-germacrene D synthase (550 aa).

Residues aspartate 304, aspartate 308, and glutamate 455 each coordinate Mg(2+). The DDXXD motif motif lies at 304–308; that stretch reads DDIYD.

Belongs to the terpene synthase family. Tpsa subfamily. Requires Mg(2+) as cofactor. The cofactor is Mn(2+). Co(2+) serves as cofactor. It depends on Ni(2+) as a cofactor.

It localises to the cytoplasm. It carries out the reaction (2E,6E)-farnesyl diphosphate = (+)-germacrene D + diphosphate. It participates in secondary metabolite biosynthesis; terpenoid biosynthesis. In terms of biological role, involved in the biosynthesis of germacrene D. Can use farnesyl diphosphate as substrate, but not geranyl diphosphate. Produces mainly (+)-germacrene D along with germacrene B and a number of minor by-products. In Zingiber officinale (Ginger), this protein is (+)-germacrene D synthase.